A 129-amino-acid chain; its full sequence is Selenoprotein M (129 aa).

The signal sequence occupies residues Met-1–Ala-19. Residues Cys-35 and Sec-38 each act as nucleophile in the active site. Residue Sec-38 is a non-standard amino acid, selenocysteine. A disordered region spans residues Lys-107–Leu-129. Positions Lys-126 to Leu-129 match the Prevents secretion from ER motif.

This sequence belongs to the selenoprotein M/F family. As to expression, high expression levels observed in hepatopancreas, testis, ovaries and intestine. Also expressed in heart, stomach, gills, cranial ganglia, muscle and hematocytes.

It localises to the endoplasmic reticulum. Its function is as follows. May function as a thiol-disulfide oxidoreductase that participates in disulfide bond formation. Involved in the regulation of reproduction during the period of rapid gonadal development. This is Selenoprotein M from Eriocheir sinensis (Chinese mitten crab).